The following is a 357-amino-acid chain: Putative F-box protein At5g50220 (357 aa).

Positions 27-73 (IAEDIGIPIDLMVEILKKLPAKSLIKFQCVSKQWSSIIGSSRDFIDS) constitute an F-box domain.

This Arabidopsis thaliana (Mouse-ear cress) protein is Putative F-box protein At5g50220.